Reading from the N-terminus, the 316-residue chain is Mycothiol acetyltransferase (316 aa).

N-acetyltransferase domains lie at 16–153 and 156–316; these read REVR…VPAV and VRIR…PAAN. Glu-36 provides a ligand contact to 1D-myo-inositol 2-(L-cysteinylamino)-2-deoxy-alpha-D-glucopyranoside. Residues 83 to 85 and 91 to 96 contribute to the acetyl-CoA site; these read LVV and RRGIGS. 1D-myo-inositol 2-(L-cysteinylamino)-2-deoxy-alpha-D-glucopyranoside contacts are provided by Glu-183, Lys-228, and Glu-238. Residues 242 to 244 and 249 to 255 each bind acetyl-CoA; these read VGV and QGRGLGQ. Position 283 (Tyr-283) interacts with 1D-myo-inositol 2-(L-cysteinylamino)-2-deoxy-alpha-D-glucopyranoside. 288-293 is a binding site for acetyl-CoA; that stretch reads NVAAVR.

This sequence belongs to the acetyltransferase family. MshD subfamily. As to quaternary structure, monomer.

It carries out the reaction 1D-myo-inositol 2-(L-cysteinylamino)-2-deoxy-alpha-D-glucopyranoside + acetyl-CoA = mycothiol + CoA + H(+). In terms of biological role, catalyzes the transfer of acetyl from acetyl-CoA to desacetylmycothiol (Cys-GlcN-Ins) to form mycothiol. The protein is Mycothiol acetyltransferase of Mycolicibacterium paratuberculosis (strain ATCC BAA-968 / K-10) (Mycobacterium paratuberculosis).